A 186-amino-acid polypeptide reads, in one-letter code: Dynactin subunit 3 (186 aa).

A2 carries the N-acetylalanine modification. Residues 135 to 157 (QQQDQCVEITEESKALLEEYNKT) adopt a coiled-coil conformation.

It belongs to the dynactin subunit 3 family. As to quaternary structure, subunit of dynactin, a multiprotein complex part of a tripartite complex with dynein and a adapter, such as BICDL1, BICD2 or HOOK3. The dynactin complex is built around ACTR1A/ACTB filament and consists of an actin-related filament composed of a shoulder domain, a pointed end and a barbed end. Its length is defined by its flexible shoulder domain. The soulder is composed of 2 DCTN1 subunits, 4 DCTN2 and 2 DCTN3. The 4 DCNT2 (via N-terminus) bind the ACTR1A filament and act as molecular rulers to determine the length. The pointed end is important for binding dynein-dynactin cargo adapters. Consists of 4 subunits: ACTR10, DCNT4, DCTN5 and DCTN6. The barbed end is composed of a CAPZA1:CAPZB heterodimers, which binds ACTR1A/ACTB filament and dynactin and stabilizes dynactin.

It is found in the cytoplasm. Its subcellular location is the cytoskeleton. The protein resides in the microtubule organizing center. The protein localises to the centrosome. It localises to the chromosome. It is found in the centromere. Its subcellular location is the kinetochore. The protein resides in the spindle. The protein localises to the cleavage furrow. It localises to the midbody. Its function is as follows. Part of the dynactin complex that activates the molecular motor dynein for ultra-processive transport along microtubules. Together with dynein may be involved in spindle assembly and cytokinesis. The polypeptide is Dynactin subunit 3 (DCTN3) (Bos taurus (Bovine)).